Reading from the N-terminus, the 405-residue chain is Formate-dependent phosphoribosylglycinamide formyltransferase (405 aa).

N(1)-(5-phospho-beta-D-ribosyl)glycinamide-binding positions include 22 to 23 (EL) and Glu-82. ATP contacts are provided by residues Arg-115, Lys-162, 167–172 (SSGKGQ), 202–205 (EGFI), and Glu-210. Residues 120 to 320 (RLAAETLGLP…EFELHARAIL (201 aa)) form the ATP-grasp domain. Mg(2+) contacts are provided by Glu-279 and Glu-291. N(1)-(5-phospho-beta-D-ribosyl)glycinamide contacts are provided by residues Asp-298, Lys-367, and 374-375 (RR).

It belongs to the PurK/PurT family. As to quaternary structure, homodimer.

It catalyses the reaction N(1)-(5-phospho-beta-D-ribosyl)glycinamide + formate + ATP = N(2)-formyl-N(1)-(5-phospho-beta-D-ribosyl)glycinamide + ADP + phosphate + H(+). Its pathway is purine metabolism; IMP biosynthesis via de novo pathway; N(2)-formyl-N(1)-(5-phospho-D-ribosyl)glycinamide from N(1)-(5-phospho-D-ribosyl)glycinamide (formate route): step 1/1. Functionally, involved in the de novo purine biosynthesis. Catalyzes the transfer of formate to 5-phospho-ribosyl-glycinamide (GAR), producing 5-phospho-ribosyl-N-formylglycinamide (FGAR). Formate is provided by PurU via hydrolysis of 10-formyl-tetrahydrofolate. In Leptothrix cholodnii (strain ATCC 51168 / LMG 8142 / SP-6) (Leptothrix discophora (strain SP-6)), this protein is Formate-dependent phosphoribosylglycinamide formyltransferase.